Reading from the N-terminus, the 161-residue chain is ATP synthase subunit b (161 aa).

A helical transmembrane segment spans residues 1-21 (MYLNATILGQVIAFILFVWFC).

Belongs to the ATPase B chain family. F-type ATPases have 2 components, F(1) - the catalytic core - and F(0) - the membrane proton channel. F(1) has five subunits: alpha(3), beta(3), gamma(1), delta(1), epsilon(1). F(0) has three main subunits: a(1), b(2) and c(10-14). The alpha and beta chains form an alternating ring which encloses part of the gamma chain. F(1) is attached to F(0) by a central stalk formed by the gamma and epsilon chains, while a peripheral stalk is formed by the delta and b chains.

It localises to the cell inner membrane. In terms of biological role, f(1)F(0) ATP synthase produces ATP from ADP in the presence of a proton or sodium gradient. F-type ATPases consist of two structural domains, F(1) containing the extramembraneous catalytic core and F(0) containing the membrane proton channel, linked together by a central stalk and a peripheral stalk. During catalysis, ATP synthesis in the catalytic domain of F(1) is coupled via a rotary mechanism of the central stalk subunits to proton translocation. Component of the F(0) channel, it forms part of the peripheral stalk, linking F(1) to F(0). This Blochmanniella floridana protein is ATP synthase subunit b.